Here is a 197-residue protein sequence, read N- to C-terminus: Beta-crystallin A2 (197 aa).

The N-terminal arm stretch occupies residues 1–11; sequence MSSAPAPGSAP. 2 Beta/gamma crystallin 'Greek key' domains span residues 12 to 52 and 53 to 99; these read VCLT…KVEN and GAWV…RPVL. The segment at 100 to 105 is connecting peptide; that stretch reads CANHSD. Beta/gamma crystallin 'Greek key' domains follow at residues 106–147 and 148–196; these read SRVT…KVSS and GAWV…RRVQ.

It belongs to the beta/gamma-crystallin family. In terms of assembly, homo/heterodimer, or complexes of higher-order. The structure of beta-crystallin oligomers seems to be stabilized through interactions between the N-terminal arms.

Functionally, crystallins are the dominant structural components of the vertebrate eye lens. In Mus musculus (Mouse), this protein is Beta-crystallin A2 (Cryba2).